The following is a 309-amino-acid chain: Hydroxyacylglutathione hydrolase, mitochondrial (309 aa).

The N-terminal 24 residues, 1–24 (MVLGRGSLCLRSLSVLGAACARRG), are a transit peptide targeting the mitochondrion. K90 is modified (N6-acetyllysine). Zn(2+) is bound by residues H103, H105, D107, and H108. K117 carries the post-translational modification N6-acetyllysine. Residues H159 and D183 each coordinate Zn(2+). Substrate contacts are provided by residues 192-194 (KFY) and 222-224 (HEY). A Zn(2+)-binding site is contributed by H222. K230 is subject to N6-acetyllysine; alternate. An N6-succinyllysine; alternate modification is found at K230. A substrate-binding site is contributed by 298-301 (RREK).

The protein belongs to the metallo-beta-lactamase superfamily. Glyoxalase II family. Monomer. It depends on Zn(2+) as a cofactor. Strongly expressed in testis, skeletal muscle and heart. Weakly expressed in placenta, pancreas, spleen and peripheral blood leukocytes.

It localises to the mitochondrion matrix. Its subcellular location is the cytoplasm. The catalysed reaction is an S-(2-hydroxyacyl)glutathione + H2O = a 2-hydroxy carboxylate + glutathione + H(+). The enzyme catalyses (R)-S-lactoylglutathione + H2O = (R)-lactate + glutathione + H(+). It participates in secondary metabolite metabolism; methylglyoxal degradation; (R)-lactate from methylglyoxal: step 2/2. Thiolesterase that catalyzes the hydrolysis of S-D-lactoyl-glutathione to form glutathione and D-lactic acid. This Rattus norvegicus (Rat) protein is Hydroxyacylglutathione hydrolase, mitochondrial (Hagh).